A 1488-amino-acid chain; its full sequence is Chromosome partition protein MukB (1488 aa).

34–41 (GGNGAGKS) is an ATP binding site. 3 coiled-coil regions span residues 326–418 (LEAD…QYNQ), 444–472 (LDTF…QTAH), and 509–602 (RHLA…RRAP). Residues 666–783 (PGGAEDQRLN…SLPIFGRAAR (118 aa)) are flexible hinge. Coiled coils occupy residues 835-923 (EAEI…AKLE), 977-1116 (EMLS…AKAG), and 1209-1265 (VEAI…LQSV). Residues 1049 to 1074 (ADSGAEERARQRRDELHAQLSNNRSR) are disordered. A compositionally biased stretch (basic and acidic residues) spans 1051 to 1065 (SGAEERARQRRDELH).

This sequence belongs to the SMC family. MukB subfamily. Homodimerization via its hinge domain. Binds to DNA via its C-terminal region. Interacts, and probably forms a ternary complex, with MukE and MukF via its C-terminal region. The complex formation is stimulated by calcium or magnesium. Interacts with tubulin-related protein FtsZ.

The protein resides in the cytoplasm. It localises to the nucleoid. In terms of biological role, plays a central role in chromosome condensation, segregation and cell cycle progression. Functions as a homodimer, which is essential for chromosome partition. Involved in negative DNA supercoiling in vivo, and by this means organize and compact chromosomes. May achieve or facilitate chromosome segregation by condensation DNA from both sides of a centrally located replisome during cell division. The chain is Chromosome partition protein MukB from Salmonella agona (strain SL483).